Here is a 252-residue protein sequence, read N- to C-terminus: Aspartate/glutamate leucyltransferase (252 aa).

It belongs to the R-transferase family. Bpt subfamily.

It localises to the cytoplasm. The catalysed reaction is N-terminal L-glutamyl-[protein] + L-leucyl-tRNA(Leu) = N-terminal L-leucyl-L-glutamyl-[protein] + tRNA(Leu) + H(+). It carries out the reaction N-terminal L-aspartyl-[protein] + L-leucyl-tRNA(Leu) = N-terminal L-leucyl-L-aspartyl-[protein] + tRNA(Leu) + H(+). Its function is as follows. Functions in the N-end rule pathway of protein degradation where it conjugates Leu from its aminoacyl-tRNA to the N-termini of proteins containing an N-terminal aspartate or glutamate. In Afipia carboxidovorans (strain ATCC 49405 / DSM 1227 / KCTC 32145 / OM5) (Oligotropha carboxidovorans), this protein is Aspartate/glutamate leucyltransferase.